The primary structure comprises 168 residues: Mitochondrial inner membrane protein Mpv17 (168 aa).

The next 4 membrane-spanning stretches (helical) occupy residues I12 to F29, R41 to Y61, M82 to V101, and L144 to L166.

Belongs to the peroxisomal membrane protein PXMP2/4 family. As to quaternary structure, part of a larger complex that may be a homohexamer.

The protein resides in the mitochondrion inner membrane. Functionally, non-selective channel that modulates the membrane potential under normal conditions and oxidative stress, and is involved in mitochondrial homeostasis. Can translocate uridine, but not orotate, across a lipid membrane. Involved in maintenance of mitochondrial ultrastructure. May be involved in mitochondrial DNA (mtDNA) maintenance but does not appear to be directly involved in mitochondrial deoxynucleoside triphosphate (dNTP) pool homeostasis. May be involved in the regulation of reactive oxygen species metabolism and the control of oxidative phosphorylation. This chain is Mitochondrial inner membrane protein Mpv17, found in Drosophila melanogaster (Fruit fly).